The following is a 141-amino-acid chain: MRQRTIVCPLIQNDGAYLLCKMADDRGVFPGQWALSGGGVEPGERIEDALRREIREELGDKLILQKITPWTFSDDVRMKTYADGTKEEIYMIYLIFDCVSANREITINEEFQDFAWVKPQDLAQYDLNVATRKTLSLKGLL.

The 141-residue stretch at 1 to 141 (MRQRTIVCPL…RKTLSLKGLL (141 aa)) folds into the Nudix hydrolase domain. Positions 38-59 (GGVEPGERIEDALRREIREELG) match the Nudix box motif.

This sequence belongs to the Nudix hydrolase family. NudI subfamily. Monomer. Mg(2+) serves as cofactor.

The catalysed reaction is a ribonucleoside 5'-triphosphate + H2O = a ribonucleoside 5'-phosphate + diphosphate + H(+). The enzyme catalyses a 2'-deoxyribonucleoside 5'-triphosphate + H2O = a 2'-deoxyribonucleoside 5'-phosphate + diphosphate + H(+). It catalyses the reaction dUTP + H2O = dUMP + diphosphate + H(+). It carries out the reaction dTTP + H2O = dTMP + diphosphate + H(+). The catalysed reaction is dCTP + H2O = dCMP + diphosphate + H(+). In terms of biological role, catalyzes the hydrolysis of nucleoside triphosphates, with a preference for pyrimidine deoxynucleoside triphosphates (dUTP, dTTP and dCTP). In Escherichia fergusonii (strain ATCC 35469 / DSM 13698 / CCUG 18766 / IAM 14443 / JCM 21226 / LMG 7866 / NBRC 102419 / NCTC 12128 / CDC 0568-73), this protein is Nucleoside triphosphatase NudI.